An 823-amino-acid polypeptide reads, in one-letter code: Zygotic DNA replication licensing factor mcm6 (823 aa).

A C4-type zinc finger spans residues cysteine 159–cysteine 186. The region spanning leucine 347–valine 554 is the MCM domain. Glycine 397 to serine 404 contributes to the ATP binding site. Positions serine 529 to aspartate 532 match the Arginine finger motif. Positions asparagine 666 to lysine 713 are disordered. Residues leucine 667–glutamine 680 show a composition bias toward acidic residues. Residues glycine 692 to glycine 702 are compositionally biased toward low complexity.

Belongs to the MCM family. In terms of assembly, component of the mcm2-7 complex (RLF-M). The complex forms a toroidal hexameric ring with the proposed subunit order mcm2-mcm6-mcm4-mcm7-mcm3-mcm5. Begins to associate with zmcm3, mcm4 and mcm7 into mcm complexes at the neurula stage.

The protein resides in the nucleus. It catalyses the reaction ATP + H2O = ADP + phosphate + H(+). Its function is as follows. Acts as a component of the mcm2-7 complex (mcm complex) which is the putative replicative helicase essential for 'once per cell cycle' DNA replication initiation and elongation in eukaryotic cells. The active ATPase sites in the mcm2-7 ring are formed through the interaction surfaces of two neighboring subunits such that a critical structure of a conserved arginine finger motif is provided in trans relative to the ATP-binding site of the Walker A box of the adjacent subunit. The six ATPase active sites, however, are likely to contribute differentially to the complex helicase activity. The existence of maternal and zygotic forms of mcm3 and mcm6 suggests that specific forms of mcm2-7 complexes may be used during different stages of development. May replace mmcm6 in the mcm2-7 complex. In Xenopus tropicalis (Western clawed frog), this protein is Zygotic DNA replication licensing factor mcm6.